The following is a 497-amino-acid chain: uncharacterized protein (497 aa).

ABC transporter domains lie at 9–247 (VSVR…MGQA) and 256–496 (ARPA…TGMA). 41-48 (GGNGAGKS) is an ATP binding site.

Belongs to the ABC transporter superfamily. Ribose importer (TC 3.A.1.2.1) family.

It is found in the cell membrane. Probably part of the binding-protein-dependent transport system y4mIJK. This system probably transports a sugar. Probably responsible for energy coupling to the transport system. This is an uncharacterized protein from Sinorhizobium fredii (strain NBRC 101917 / NGR234).